Here is a 304-residue protein sequence, read N- to C-terminus: uncharacterized protein (304 aa).

The interval 1–183 is disordered; the sequence is MTAPNEPGAL…ARVQLSARRS (183 aa). Over residues 132–166 the composition is skewed to low complexity; it reads PTPRAPQRNPAPARPAEGGAGSRGDSAAGSSGGRS. A run of 2 helical transmembrane segments spans residues 206–226 and 265–285; these read LLLSVALFFVWMITVAFLYLV and FLIGLVNIVLMTALATIGAFV.

To M.leprae ML0007.

Its subcellular location is the cell membrane. This is an uncharacterized protein from Mycobacterium tuberculosis (strain ATCC 25618 / H37Rv).